The following is a 1043-amino-acid chain: MREEPTAGTADATLNKLLQAADLSGYESDLRRKLKLRNAADLQYVEEVDLLSVGMSRPEQKRLRKEYTKMFPSGIFGKVKKAFKRAESLDRKTSNSVANQDDNDHHVIPIEKITLCKELGQGEFGSVWQAGWKNSAGSDVIQVAVKCVGSDKLLATSSSFLQEAAIMTRMRHEHVVRLYGVVLDTKKIMLVSELATCGSLLECLHKPALRDSFPVHVLCDYAEQIAMGMSYLELQRLIHRDLAARNVLVFSPKLVKISDFGLSRSLGIGEDYYRSEFTPNLKLPIAWCAPECINFLKFTSKSDVWAYGVTIWEMFSYGEMPWKGRSGAQILELVDRKKELLTRPKACPEDIYDMLKETWTHQVQDRPTFSDIVAKFPERRAQSVRAVVDCKDSAADHLHFKKDDLIVVISRSPAQYPDGYYWFGSLRNGKLGLFRPTDTVAHLGSEPPCSNGTIENGFSEKEKGGKKNKKAEKESERERKKLLISEPVGDVRHTCHVGIDGTAFGLLQLDKKAMCPTSSSPSTSRGSQASPAPSHTSSSTTSSVHLRETVARNGVPIKETMSLRDVGPLSRDALNLRDTVSPPVARAPSQPPSYSQPRPPPRSVSSVSSGNQHSVQVHDQFSSLDRSRGSLTPTAPPLTASAANSLKDPLTGISLSIPSNNLISYMDDQEDDHRWTRSPGAISQSTTLTALSSSRKDPIPAPRGPVAAVYARGKDIPTPASKSDIALCEKIEDLNRDLTNYSIGTICDYSEDRPLLDSMNRTISSSTTHQPPPQSSEARIRFMTEQEVRKINEKSAREHRKTEDLLREERQKEQKPGEIEEPQQPAESLYSTRTPQQEGWSSAAQEAYKLLVECGTNLKQASVSPPPMSPTSSRLSTLDRSSISPAPPRPVTPPLSVRNETISMRKSQQEEMEHVTVEENSPKRVHIIETKLIDGPARGMSPIQDRHIPAFTTPMSNGSFRKAPAPTPVSPAPAGSTDQKPPPCRPPKTRQFPLVIDERNLAYDNLNGFGAGARVAPPVPPKPKVRTIFSFADDQKKQKEVAN.

A Protein kinase domain is found at 113 to 379; that stretch reads ITLCKELGQG…SDIVAKFPER (267 aa). ATP-binding positions include 119 to 127 and K146; that span reads LGQGEFGSV. D241 (proton acceptor) is an active-site residue. Residues 379–444 form the SH3 domain; the sequence is RRAQSVRAVV…RPTDTVAHLG (66 aa). A disordered region spans residues 443–481; that stretch reads LGSEPPCSNGTIENGFSEKEKGGKKNKKAEKESERERKK. A compositionally biased stretch (basic and acidic residues) spans 458–481; the sequence is FSEKEKGGKKNKKAEKESERERKK. A CRIB domain is found at 484–498; the sequence is ISEPVGDVRHTCHVG. Disordered regions lie at residues 514 to 644, 790 to 842, 859 to 898, and 932 to 993; these read MCPT…SAAN, KINE…GWSS, KQAS…LSVR, and LIDG…RQFP. The span at 516–543 shows a compositional bias: low complexity; the sequence is PTSSSPSTSRGSQASPAPSHTSSSTTSS. Residues 610–624 show a composition bias toward polar residues; the sequence is GNQHSVQVHDQFSSL. The span at 630-644 shows a compositional bias: low complexity; that stretch reads SLTPTAPPLTASAAN. Residues 785 to 812 are a coiled coil; that stretch reads EQEVRKINEKSAREHRKTEDLLREERQK. The segment covering 790–818 has biased composition (basic and acidic residues); it reads KINEKSAREHRKTEDLLREERQKEQKPGE. Polar residues predominate over residues 825-842; it reads PAESLYSTRTPQQEGWSS. A compositionally biased stretch (low complexity) spans 870-884; it reads PTSSRLSTLDRSSIS.

This sequence belongs to the protein kinase superfamily. Tyr protein kinase family. It depends on Mg(2+) as a cofactor.

It carries out the reaction L-tyrosyl-[protein] + ATP = O-phospho-L-tyrosyl-[protein] + ADP + H(+). It catalyses the reaction L-seryl-[protein] + ATP = O-phospho-L-seryl-[protein] + ADP + H(+). The catalysed reaction is L-threonyl-[protein] + ATP = O-phospho-L-threonyl-[protein] + ADP + H(+). Probable tyrosine protein kinase which plays a role in vulva development, probably by acting as a negative regulator of the let-23/EGFR and let-60/ras pathway. Involved in the negative regulation of germline development. This is Ack-related non-receptor tyrosine kinase from Caenorhabditis elegans.